Here is a 125-residue protein sequence, read N- to C-terminus: Large ribosomal subunit protein bL12 (125 aa).

It belongs to the bacterial ribosomal protein bL12 family. As to quaternary structure, homodimer. Part of the ribosomal stalk of the 50S ribosomal subunit. Forms a multimeric L10(L12)X complex, where L10 forms an elongated spine to which 2 to 4 L12 dimers bind in a sequential fashion. Binds GTP-bound translation factors.

Its function is as follows. Forms part of the ribosomal stalk which helps the ribosome interact with GTP-bound translation factors. Is thus essential for accurate translation. In Campylobacter jejuni subsp. jejuni serotype O:2 (strain ATCC 700819 / NCTC 11168), this protein is Large ribosomal subunit protein bL12.